Reading from the N-terminus, the 218-residue chain is Protein THO1 (218 aa).

In terms of domain architecture, SAP spans 4–38 (YSSLTVVQLKDLLTKRNLSVGGLKNELVQRLIKDD). Serine 22 is subject to Phosphoserine. Disordered regions lie at residues 37 to 123 (DDEE…LSPE) and 177 to 218 (LVSR…GYRR). The span at 47–57 (VSPQEQNQEQG) shows a compositional bias: polar residues. Phosphoserine is present on residues serine 58 and serine 68. The segment covering 72-96 (TEKKEVSSEPKETNEPKEENKDVQK) has biased composition (basic and acidic residues). Composition is skewed to low complexity over residues 102-122 (SATASENEQAAASTAAPALSP) and 186-203 (SGNNGKFKNRNKNANNRS). Positions 204–218 (RVSKNRRGNRSGYRR) are enriched in basic residues.

Belongs to the SAP domain-containing ribonucleoprotein family. Interacts with SUB2 in the presence of RNA; this interaction facilitates RNA binding of SUB2.

Facilitates RNA binding of SUB2 and likely plays a role in mRNA export. Suppressor of the transcriptional defect of HPR1 by overexpression. This Saccharomyces cerevisiae (strain ATCC 204508 / S288c) (Baker's yeast) protein is Protein THO1 (THO1).